The following is a 214-amino-acid chain: External core antigen (214 aa).

The first 19 residues, methionine 1 to alanine 19, serve as a signal peptide directing secretion. The HBEAG stretch occupies residues glycine 25–leucine 27. The disordered stretch occupies residues asparagine 165–cysteine 214. Basic residues predominate over residues valine 178 to serine 207. One copy of the 1; half-length repeat lies at serine 186–proline 192. A 3 X 8 AA repeats of S-P-R-R-R-R-S-Q region spans residues serine 186 to glutamine 208. The propeptide occupies serine 186–cysteine 214. Tandem repeats lie at residues serine 193–glutamine 200 and serine 201–glutamine 208.

Belongs to the orthohepadnavirus precore antigen family. As to quaternary structure, homodimerizes. In terms of processing, phosphorylated. Post-translationally, cleaved by host furin.

It is found in the secreted. The protein localises to the host nucleus. Functionally, may regulate immune response to the intracellular capsid in acting as a T-cell tolerogen, by having an immunoregulatory effect which prevents destruction of infected cells by cytotoxic T-cells. This immune regulation may predispose to chronicity during perinatal infections and prevent severe liver injury during adult infections. The sequence is that of External core antigen from Homo sapiens (Human).